Here is a 336-residue protein sequence, read N- to C-terminus: Cinnamoyl-CoA reductase 2 (336 aa).

NADP(+) is bound by residues 21 to 27 (GAGGFIA), arginine 46, lysine 52, 72 to 73 (DL), 92 to 94 (TAS), tyrosine 165, lysine 169, 192 to 195 (PVVV), and serine 207. Cysteine 158 and cysteine 166 are joined by a disulfide. The active-site Proton donor is the lysine 169.

The protein belongs to the NAD(P)-dependent epimerase/dehydratase family. Dihydroflavonol-4-reductase subfamily. The formation of a reversible disulfide bond reduces activity by perturbing the positioning of nearby catalytic residues. As to expression, mainly expressed in roots and stems, especially at the second internode and, to a lower extent, in leaves and flowers. Localized in vascular elements, with weaker expression in the interfascicular (xylem fiber) region.

Its subcellular location is the cytoplasm. The enzyme catalyses (E)-coniferaldehyde + NADP(+) + CoA = (E)-feruloyl-CoA + NADPH + H(+). It carries out the reaction (E)-4-coumaraldehyde + NADP(+) + CoA = (E)-4-coumaroyl-CoA + NADPH + H(+). It catalyses the reaction (E)-sinapaldehyde + NADP(+) + CoA = (E)-sinapoyl-CoA + NADPH + H(+). The catalysed reaction is (E)-cinnamaldehyde + NADP(+) + CoA = (E)-cinnamoyl-CoA + NADPH + H(+). The enzyme catalyses (E)-caffeyl aldehyde + NADP(+) + CoA = (E)-caffeoyl-CoA + NADPH + H(+). It functions in the pathway aromatic compound metabolism; phenylpropanoid biosynthesis. Involved in the latter stages of lignin biosynthesis. Catalyzes one of the last steps of monolignol biosynthesis, the conversion of cinnamoyl-CoAs into their corresponding cinnamaldehydes. Mediates the conversion of caffeoyl-CoA and coumaroyl-CoA to caffaldehyde and coumaraldehyde, respectively. Also active, with a lower efficiency, toward feruloyl-CoA and sinapoyl-CoA. Involved in the production of floral volatile phenylpropanoids in flowers of fragrant cultivars from cinnamic acid, a common precursor with the anthocyanin biosynthesis pathway involved in flower pigmentation. This chain is Cinnamoyl-CoA reductase 2, found in Medicago truncatula (Barrel medic).